The primary structure comprises 381 residues: Ribosome assembly 1 protein (381 aa).

Met-1 carries the post-translational modification N-acetylmethionine. 3 disordered regions span residues 1–38 (MNYN…IKRQ), 164–216 (KDTF…DRDE), and 350–381 (FGSS…TRNK). Phosphoserine is present on Ser-172. Over residues 359 to 371 (NHYKPNYKNRKPN) the composition is skewed to basic residues.

The protein localises to the nucleus. In terms of biological role, involved in a late nucleoplasmic step of 60S ribosomal subunit assembly. The chain is Ribosome assembly 1 protein (RSA1) from Saccharomyces cerevisiae (strain ATCC 204508 / S288c) (Baker's yeast).